Here is a 190-residue protein sequence, read N- to C-terminus: Movement protein TGB3 (190 aa).

Over 1 to 52 (MDPPVILHSPNCSCQFCSSELPSTHTCGSQDRTVPLHVEATAAGHMEAKNFS) the chain is Cytoplasmic. Residues 53 to 73 (LQYVLLVAFVSVLLGFSFCVY) traverse the membrane as a helical segment. Topologically, residues 74-166 (LKSMSNDEAS…TPCENNVLLK (93 aa)) are lumenal. Phosphotyrosine is present on residues tyrosine 89 and tyrosine 120. The Involved in plasmodesmata targeting and virus cell-to-cell movement motif lies at 89 to 93 (YQDLN). Residues 167–187 (LWKDDLSFTIIAVTVLVGAML) traverse the membrane as a helical segment. Residues 188 to 190 (ARC) lie on the Cytoplasmic side of the membrane.

Belongs to the virgaviridae TGB3 movement protein family. Interacts with movement protein TGB2. TGB1-TGB3-TGB2 complex formation is enhanced by ATP hydrolysis.

It localises to the host cell junction. Its subcellular location is the host plasmodesma. The protein resides in the host endoplasmic reticulum membrane. It is found in the host cytoplasm. The protein localises to the host cytoskeleton. Functionally, participates in the transport of viral genome to neighboring plant cells directly through plasmodesmata, without any budding. TGBp2 and TGBp3 are necessary for intracellular delivery of TGBp1-containing vRNPs to plasmodesmata. Can gate plasmodesmata and increase their size exclusion limit. Induces host actin cytoskeleton network thickening, which probably plays a major role in virus cell-to-cell movement. The protein is Movement protein TGB3 of Solanum nigrum (Black nightshade).